The chain runs to 89 residues: Putative protein T-ENOL (89 aa).

Disordered regions lie at residues 1–31 (MAST…KASL) and 54–89 (RSHM…TDTR).

Specifically expressed in testis (at protein level).

The protein is Putative protein T-ENOL of Rattus norvegicus (Rat).